The following is a 37-amino-acid chain: Esculentin-2HSa (37 aa).

Residues Cys31 and Cys37 are joined by a disulfide bond.

Expressed by the skin glands.

Its subcellular location is the secreted. Has antibacterial activity against the Gram-positive bacterium S.aureus ATCC 25923 (MIC=32 uM) and the Gram-negative bacterium E.coli ATCC 25726 (MIC=16 uM). The sequence is that of Esculentin-2HSa from Odorrana hosii (Hose's rock frog).